A 130-amino-acid chain; its full sequence is MFAVIKTGGKQYRVAANDVITVATLEGEAGAAVTFGDVLLFTDGDATQVGTPLLSGIGVTGEIVQHGRTRKVIAFKKRRRQNSRRRRGHRQDFTVVRITEISAGGKTSKAEPRKTRKAEPAAESAPAAAE.

The segment at 103–130 (AGGKTSKAEPRKTRKAEPAAESAPAAAE) is disordered. Over residues 108–120 (SKAEPRKTRKAEP) the composition is skewed to basic and acidic residues. The span at 121–130 (AAESAPAAAE) shows a compositional bias: low complexity.

It belongs to the bacterial ribosomal protein bL21 family. As to quaternary structure, part of the 50S ribosomal subunit. Contacts protein L20.

This protein binds to 23S rRNA in the presence of protein L20. The protein is Large ribosomal subunit protein bL21 of Methylorubrum extorquens (strain CM4 / NCIMB 13688) (Methylobacterium extorquens).